Consider the following 302-residue polypeptide: Quinolinate synthase (302 aa).

H24 and S41 together coordinate iminosuccinate. Position 86 (C86) interacts with [4Fe-4S] cluster. Iminosuccinate contacts are provided by residues 112 to 114 (YVN) and S129. C173 is a [4Fe-4S] cluster binding site. Iminosuccinate contacts are provided by residues 199–201 (HPE) and T216. Position 259 (C259) interacts with [4Fe-4S] cluster.

Belongs to the quinolinate synthase family. Type 2 subfamily. It depends on [4Fe-4S] cluster as a cofactor.

It is found in the cytoplasm. It catalyses the reaction iminosuccinate + dihydroxyacetone phosphate = quinolinate + phosphate + 2 H2O + H(+). Its pathway is cofactor biosynthesis; NAD(+) biosynthesis; quinolinate from iminoaspartate: step 1/1. Its function is as follows. Catalyzes the condensation of iminoaspartate with dihydroxyacetone phosphate to form quinolinate. This Thermococcus onnurineus (strain NA1) protein is Quinolinate synthase.